The chain runs to 287 residues: Protease HtpX (287 aa).

A run of 2 helical transmembrane segments spans residues 4-24 (IMLF…VLNI) and 36-56 (LSGL…ISLM). Zn(2+) is bound at residue histidine 143. Glutamate 144 is a catalytic residue. Histidine 147 is a binding site for Zn(2+). Transmembrane regions (helical) follow at residues 158 to 178 (LMQG…ANIV) and 192 to 212 (MVYF…ASFI). A Zn(2+)-binding site is contributed by glutamate 221.

The protein belongs to the peptidase M48B family. The cofactor is Zn(2+).

The protein localises to the cell inner membrane. In Vibrio parahaemolyticus serotype O3:K6 (strain RIMD 2210633), this protein is Protease HtpX.